Consider the following 420-residue polypeptide: Aminoacyltransferase FemA (420 aa).

Belongs to the FemABX family. In terms of assembly, homodimer. Interacts with FemB.

The protein resides in the cytoplasm. It catalyses the reaction beta-D-GlcNAc-(1-&gt;4)-Mur2Ac(oyl-L-Ala-D-isoglutaminyl-L-Lys-(N(6)-Gly)-D-Ala-D-Ala)-di-trans,octa-cis-undecaprenyl diphosphate + 2 glycyl-tRNA(Gly) = MurNAc-L-Ala-D-isoglutaminyl-L-Lys-(N(6)-tri-Gly)-D-Ala-D-Ala-diphospho-di-trans,octa-cis-undecaprenyl-GlcNAc + 2 tRNA(Gly) + 2 H(+). Functionally, catalyzes the formation of the pentaglycine interpeptide bridge, which is characteristic of the S.aureus peptidoglycan. Adds glycines 2 and 3 of the pentaglycine bridge, using glycyl-tRNA(Gly) as donor. This is Aminoacyltransferase FemA (femA) from Staphylococcus aureus (strain bovine RF122 / ET3-1).